The following is a 241-amino-acid chain: Octanoyltransferase (241 aa).

In terms of domain architecture, BPL/LPL catalytic spans 38-227 (AGGPDTLLLL…AVCNALDGAL (190 aa)). Substrate-binding positions include 85–92 (RGGKITWH), 157–159 (AIG), and 170–172 (GFA). Cysteine 188 serves as the catalytic Acyl-thioester intermediate.

The protein belongs to the LipB family.

It is found in the cytoplasm. The catalysed reaction is octanoyl-[ACP] + L-lysyl-[protein] = N(6)-octanoyl-L-lysyl-[protein] + holo-[ACP] + H(+). The protein operates within protein modification; protein lipoylation via endogenous pathway; protein N(6)-(lipoyl)lysine from octanoyl-[acyl-carrier-protein]: step 1/2. Catalyzes the transfer of endogenously produced octanoic acid from octanoyl-acyl-carrier-protein onto the lipoyl domains of lipoate-dependent enzymes. Lipoyl-ACP can also act as a substrate although octanoyl-ACP is likely to be the physiological substrate. This Mycobacterium ulcerans (strain Agy99) protein is Octanoyltransferase.